The sequence spans 320 residues: ATP synthase gamma chain (320 aa).

The protein belongs to the ATPase gamma chain family. As to quaternary structure, F-type ATPases have 2 components, CF(1) - the catalytic core - and CF(0) - the membrane proton channel. CF(1) has five subunits: alpha(3), beta(3), gamma(1), delta(1), epsilon(1). CF(0) has three main subunits: a, b and c.

Its subcellular location is the cell membrane. Its function is as follows. Produces ATP from ADP in the presence of a proton gradient across the membrane. The gamma chain is believed to be important in regulating ATPase activity and the flow of protons through the CF(0) complex. The chain is ATP synthase gamma chain from Lactobacillus helveticus (strain DPC 4571).